A 249-amino-acid polypeptide reads, in one-letter code: UPF0758 protein BMEI0718 (249 aa).

The segment at 1–34 is disordered; the sequence is MAKKKDTPGDGEFPGFSDTLQRTPKLEKPHYAGH. A compositionally biased stretch (basic and acidic residues) spans 24-34; the sequence is PKLEKPHYAGH. Residues 127 to 249 form the MPN domain; sequence VLGSWDKVIN…HASLRSLRLI (123 aa). Positions 198, 200, and 211 each coordinate Zn(2+). The JAMM motif signature appears at 198–211; that stretch reads HNHPSGDPTPSRAD.

It belongs to the UPF0758 family.

This chain is UPF0758 protein BMEI0718, found in Brucella melitensis biotype 1 (strain ATCC 23456 / CCUG 17765 / NCTC 10094 / 16M).